Reading from the N-terminus, the 495-residue chain is WD repeat-containing protein 37 (495 aa).

Polar residues-rich tracts occupy residues 1 to 13 and 22 to 31; these read MPTE…TARQ and SLSIRRTNSS. The segment at 1–50 is disordered; it reads MPTESASCSTARQTKQKRKSHSLSIRRTNSSEQERTGLPRDMLEGQDSKL. The span at 32-47 shows a compositional bias: basic and acidic residues; that stretch reads EQERTGLPRDMLEGQD. 2 WD repeats span residues 154–194 and 197–236; these read GHRD…CLVK and GHVG…PTPQ. The interval 237-266 is disordered; sequence PVADTSQISGEDEVECSDKDEPDLDGDVSS. Over residues 246 to 264 the composition is skewed to acidic residues; the sequence is GEDEVECSDKDEPDLDGDV. 5 WD repeats span residues 280-319, 322-361, 366-404, 407-446, and 453-494; these read SHQG…LVHS, GHDQ…IHSV, GHTD…SPIA, RTDS…LARL, and GHRR…LLQE.

Forms homodimers. Interacts with PACS1. Interacts with PACS2.

It localises to the cytoplasm. The protein resides in the nucleus. Functionally, required for normal ER Ca2+ handling in lymphocytes. Together with PACS1, it plays an essential role in stabilizing peripheral lymphocyte populations. In Pongo abelii (Sumatran orangutan), this protein is WD repeat-containing protein 37 (WDR37).